A 1054-amino-acid polypeptide reads, in one-letter code: Isoleucine--tRNA ligase (1054 aa).

The 'HIGH' region signature appears at 58-68 (PFANGLPHYGH). The short motif at 627-631 (KMSKS) is the 'KMSKS' region element. Lys630 is a binding site for ATP.

It belongs to the class-I aminoacyl-tRNA synthetase family. IleS type 2 subfamily. In terms of assembly, monomer. It depends on Zn(2+) as a cofactor.

The protein localises to the cytoplasm. It catalyses the reaction tRNA(Ile) + L-isoleucine + ATP = L-isoleucyl-tRNA(Ile) + AMP + diphosphate. Its function is as follows. Catalyzes the attachment of isoleucine to tRNA(Ile). As IleRS can inadvertently accommodate and process structurally similar amino acids such as valine, to avoid such errors it has two additional distinct tRNA(Ile)-dependent editing activities. One activity is designated as 'pretransfer' editing and involves the hydrolysis of activated Val-AMP. The other activity is designated 'posttransfer' editing and involves deacylation of mischarged Val-tRNA(Ile). This is Isoleucine--tRNA ligase from Corynebacterium efficiens (strain DSM 44549 / YS-314 / AJ 12310 / JCM 11189 / NBRC 100395).